The chain runs to 560 residues: Radial spoke head protein 3 homolog (560 aa).

Disordered stretches follow at residues 134 to 186 (RKRG…EEPM) and 225 to 249 (ARKR…PVEG). A compositionally biased stretch (polar residues) spans 153-162 (RAPSTYTYTS). The stretch at 215-239 (DSLELQRQREARKRALARKQAQEQL) forms a coiled coil. Thr-286 is modified (phosphothreonine; by MAPK1). Positions 331–385 (LEVMEEEELANLRASQREYEELRNSERAEVQRLEEQERRHREEKERRKKQQWEIM) form a coiled coil. Disordered regions lie at residues 354 to 375 (NSER…EEKE), 473 to 498 (HGED…ESLE), and 526 to 560 (DRRS…EELS).

Belongs to the flagellar radial spoke RSP3 family. As to quaternary structure, component of the axonemal radial spoke 1 (RS1) and 2 (RS2) complexes, at least composed of spoke head proteins RSPH1, RSPH3, RSPH9 and the cilia-specific component RSPH4A or sperm-specific component RSPH6A, spoke stalk proteins RSPH14, DNAJB13, DYDC1, ROPN1L and NME5, and the RS1 complex-specific anchor protein IQUB. Interacts with IQUB. Interacts with phosphorylated MAPK1. Interacts with MEK1. Interacts with PKA regulatory subunits PRKAR1A and PRKAR1B. Interacts with RSPH1. Interacts with RSPH4A. Interacts with RSPH6A. Interacts with RSPH9. Interacts with LRRC23.

Its subcellular location is the cytoplasm. It is found in the cytoskeleton. It localises to the cilium axoneme. The protein localises to the flagellum axoneme. Its function is as follows. Functions as part of axonemal radial spoke complexes that play an important part in the motility of sperm and cilia. Functions as a protein kinase A-anchoring protein that scaffolds the cAMP-dependent protein kinase holoenzyme. May serve as a point of convergence for MAPK and PKA signaling in cilia. In Homo sapiens (Human), this protein is Radial spoke head protein 3 homolog (RSPH3).